The primary structure comprises 142 residues: Hemoglobin subunit alpha-2 (142 aa).

The region spanning 2-142 is the Globin domain; the sequence is VLSPADKTNV…VSTVLTSKYR (141 aa). H59 contacts O2. H88 is a binding site for heme b.

Belongs to the globin family. Heterotetramer of two alpha chains and two beta chains. Red blood cells.

Functionally, involved in oxygen transport from the lung to the various peripheral tissues. This is Hemoglobin subunit alpha-2 from Arctocephalus galapagoensis (Galapagoes fur seal).